The following is a 179-amino-acid chain: Large ribosomal subunit protein eL18 (179 aa).

Belongs to the eukaryotic ribosomal protein eL18 family. In terms of assembly, component of the large ribosomal subunit.

The protein localises to the cytoplasm. It localises to the cytosol. The protein resides in the rough endoplasmic reticulum. Functionally, component of the large ribosomal subunit. The ribosome is a large ribonucleoprotein complex responsible for the synthesis of proteins in the cell. The chain is Large ribosomal subunit protein eL18 (rpl18) from Salmo salar (Atlantic salmon).